A 354-amino-acid polypeptide reads, in one-letter code: Ion-translocating oxidoreductase complex subunit D (354 aa).

The next 5 membrane-spanning stretches (helical) occupy residues 19 to 39 (IMLWVILAMLPAIFAQLYYFG), 40 to 60 (FGVLFQITIAVVFALCLEFLV), 70 to 89 (FYISDFSVTLTALILAVAIP), 94 to 116 (YWIILIGIFCAVILGKHVYGGLG), and 123 to 143 (AMVGYVVLLVSFPMQMTTWLA). An FMN phosphoryl threonine modification is found at Thr186. 5 helical membrane passes run 215-235 (LAGLGWFQVNLAFLLGGLFLV), 242-262 (WQIPTALLITVCLFSLCSWLF), 266-286 (MPSPLWQLFSGATMFCAFFIA), 300-320 (LVFGVLVGLLLCLIRFYGGYP), and 321-341 (DGAAFAILLANICVPLIDQYT).

The protein belongs to the NqrB/RnfD family. In terms of assembly, the complex is composed of six subunits: RnfA, RnfB, RnfC, RnfD, RnfE and RnfG. FMN is required as a cofactor.

The protein localises to the cell inner membrane. In terms of biological role, part of a membrane-bound complex that couples electron transfer with translocation of ions across the membrane. The polypeptide is Ion-translocating oxidoreductase complex subunit D (Mannheimia succiniciproducens (strain KCTC 0769BP / MBEL55E)).